A 459-amino-acid polypeptide reads, in one-letter code: MSNRFAVILAAGKGTRMKSKLYKVLHPVCGKPMVQHVVDQVSQLGLQKLVTVVGHGAEMVQEQLGNVSEFALQAEQLGTAHAVDQAAGVLANEEGTTLVICGDTPLITAETMEALLQQHKEAGAMATVLTAYIEEPAGYGRIVRNENGHVEKIVEHKDANEKELAIKEINTGTYCFDNKALFASLSKVSNDNVQGEYYLPDVIEILKNEGHIVSAYQTEHFDETLGVNDRVALSQAEIIMKNRINRKNMVNGVTIIDPSNTYISADAIIGSDTVLHPGTIIEGNTVIGSDCEIGPHTVIRDSEIGDRTTIRQSTVHDSKLGTEVSVGPFAHIRPDSVIGDEVRVGNFVEIKKTVFGNRSKASHLSYIGDAQIGEDVNLGCGSITVNYDGKNKFKTVIGNGVFIGCNSNLVAPVTVEDGAYVAAGSTITENVPSKALSVARARQVNKEDYVDQLLNKKKS.

The segment at M1–R230 is pyrophosphorylase. Residues L9–G12, K23, Q73, and G78–T79 contribute to the UDP-N-acetyl-alpha-D-glucosamine site. D103 is a binding site for Mg(2+). UDP-N-acetyl-alpha-D-glucosamine is bound by residues G140, E155, N170, and N228. N228 lines the Mg(2+) pocket. The linker stretch occupies residues V231–N251. The N-acetyltransferase stretch occupies residues G252–S459. UDP-N-acetyl-alpha-D-glucosamine-binding residues include R333 and K351. H363 acts as the Proton acceptor in catalysis. UDP-N-acetyl-alpha-D-glucosamine-binding residues include Y366 and N377. Residues N386–Y387, A423, and R440 each bind acetyl-CoA.

It in the N-terminal section; belongs to the N-acetylglucosamine-1-phosphate uridyltransferase family. In the C-terminal section; belongs to the transferase hexapeptide repeat family. As to quaternary structure, homotrimer. It depends on Mg(2+) as a cofactor.

The protein localises to the cytoplasm. The catalysed reaction is alpha-D-glucosamine 1-phosphate + acetyl-CoA = N-acetyl-alpha-D-glucosamine 1-phosphate + CoA + H(+). It catalyses the reaction N-acetyl-alpha-D-glucosamine 1-phosphate + UTP + H(+) = UDP-N-acetyl-alpha-D-glucosamine + diphosphate. The protein operates within nucleotide-sugar biosynthesis; UDP-N-acetyl-alpha-D-glucosamine biosynthesis; N-acetyl-alpha-D-glucosamine 1-phosphate from alpha-D-glucosamine 6-phosphate (route II): step 2/2. It functions in the pathway nucleotide-sugar biosynthesis; UDP-N-acetyl-alpha-D-glucosamine biosynthesis; UDP-N-acetyl-alpha-D-glucosamine from N-acetyl-alpha-D-glucosamine 1-phosphate: step 1/1. Its pathway is bacterial outer membrane biogenesis; LPS lipid A biosynthesis. Catalyzes the last two sequential reactions in the de novo biosynthetic pathway for UDP-N-acetylglucosamine (UDP-GlcNAc). The C-terminal domain catalyzes the transfer of acetyl group from acetyl coenzyme A to glucosamine-1-phosphate (GlcN-1-P) to produce N-acetylglucosamine-1-phosphate (GlcNAc-1-P), which is converted into UDP-GlcNAc by the transfer of uridine 5-monophosphate (from uridine 5-triphosphate), a reaction catalyzed by the N-terminal domain. The chain is Bifunctional protein GlmU from Bacillus cereus (strain ZK / E33L).